The primary structure comprises 684 residues: Kinesin-like protein KIN-13B (684 aa).

Disordered stretches follow at residues 1 to 31 (MSGR…SNGR) and 71 to 103 (GNEF…SPGL). Polar residues-rich tracts occupy residues 18-31 (LSDN…SNGR) and 79-91 (TTPQ…TNQR). The Kinesin motor domain occupies 169–492 (KIKVVVRKRP…LRYADRVKSL (324 aa)). ATP is bound at residue 258–265 (GQTGSGKT). The segment at 574-594 (KPTIQMKSRDMPRPDMKKSNS) is disordered. Over residues 580–594 (KSRDMPRPDMKKSNS) the composition is skewed to basic and acidic residues. Positions 596-626 (DNLNALLQEEEDLVNAHRKQVEDTMNIVKEE) form a coiled coil.

It belongs to the TRAFAC class myosin-kinesin ATPase superfamily. Kinesin family. KIN-13 subfamily.

Acts redundantly with KIN13A to modulate cell wall synthesis and cell expansion via the THE1 pathway. The sequence is that of Kinesin-like protein KIN-13B from Arabidopsis thaliana (Mouse-ear cress).